The following is a 687-amino-acid chain: Glycine--tRNA ligase beta subunit (687 aa).

Belongs to the class-II aminoacyl-tRNA synthetase family. Tetramer of two alpha and two beta subunits.

Its subcellular location is the cytoplasm. It catalyses the reaction tRNA(Gly) + glycine + ATP = glycyl-tRNA(Gly) + AMP + diphosphate. This Neisseria gonorrhoeae (strain NCCP11945) protein is Glycine--tRNA ligase beta subunit.